Reading from the N-terminus, the 309-residue chain is Lipoyl synthase (309 aa).

[4Fe-4S] cluster is bound by residues Cys-37, Cys-42, Cys-48, Cys-67, Cys-71, Cys-74, and Ser-281. The Radical SAM core domain occupies Asp-53–Leu-270.

This sequence belongs to the radical SAM superfamily. Lipoyl synthase family. [4Fe-4S] cluster is required as a cofactor.

It localises to the cytoplasm. It catalyses the reaction [[Fe-S] cluster scaffold protein carrying a second [4Fe-4S](2+) cluster] + N(6)-octanoyl-L-lysyl-[protein] + 2 oxidized [2Fe-2S]-[ferredoxin] + 2 S-adenosyl-L-methionine + 4 H(+) = [[Fe-S] cluster scaffold protein] + N(6)-[(R)-dihydrolipoyl]-L-lysyl-[protein] + 4 Fe(3+) + 2 hydrogen sulfide + 2 5'-deoxyadenosine + 2 L-methionine + 2 reduced [2Fe-2S]-[ferredoxin]. Its pathway is protein modification; protein lipoylation via endogenous pathway; protein N(6)-(lipoyl)lysine from octanoyl-[acyl-carrier-protein]: step 2/2. Functionally, catalyzes the radical-mediated insertion of two sulfur atoms into the C-6 and C-8 positions of the octanoyl moiety bound to the lipoyl domains of lipoate-dependent enzymes, thereby converting the octanoylated domains into lipoylated derivatives. This chain is Lipoyl synthase, found in Natronomonas pharaonis (strain ATCC 35678 / DSM 2160 / CIP 103997 / JCM 8858 / NBRC 14720 / NCIMB 2260 / Gabara) (Halobacterium pharaonis).